The primary structure comprises 80 residues: Conotoxin VnMSGL-0121 (80 aa).

The signal sequence occupies residues 1–20; the sequence is MSGLGIMVLTLLLLVSMATS. A propeptide spanning residues 21 to 44 is cleaved from the precursor; the sequence is HQDGGGKQATQRDAINVRRRRSIT. 3 disulfides stabilise this stretch: Cys52–Cys65, Cys56–Cys74, and Cys64–Cys78. Phe79 is subject to Phenylalanine amide.

This sequence belongs to the conotoxin O3 superfamily. As to expression, expressed by the venom duct.

The protein resides in the secreted. The protein is Conotoxin VnMSGL-0121 of Conus ventricosus (Mediterranean cone).